Here is a 210-residue protein sequence, read N- to C-terminus: UPF0301 protein OCAR_7326/OCA5_c07920 (210 aa).

The protein belongs to the UPF0301 (AlgH) family.

The sequence is that of UPF0301 protein OCAR_7326/OCA5_c07920 from Afipia carboxidovorans (strain ATCC 49405 / DSM 1227 / KCTC 32145 / OM5) (Oligotropha carboxidovorans).